Consider the following 52-residue polypeptide: MLSKDPKVLIKLGELEKDKSKAKKYFGDACDLRSQEGCDKYRELNQKQDTNK.

This is an uncharacterized protein from Haemophilus influenzae (strain ATCC 51907 / DSM 11121 / KW20 / Rd).